The primary structure comprises 1330 residues: Sister chromatid cohesion protein PDS5 homolog A (1330 aa).

Residues 387 to 423 (SLVNDQLLGFVRERTLDKRWRVRKEAMMGLAQLYKKY) form an HEAT repeat. A disordered region spans residues 1138-1330 (VNKPLSATGR…AAQRQIDLQR (193 aa)). Over residues 1160–1171 (SNISVNSELSSS) the composition is skewed to low complexity. The span at 1216–1225 (SDQATQGNST) shows a compositional bias: polar residues.

It belongs to the PDS5 family. As to quaternary structure, interacts with the cohesin complex. Binds chromatin in a cohesin-dependent manner.

The protein localises to the nucleus. May regulate sister chromatid cohesion during mitosis and couple it to DNA replication. This is Sister chromatid cohesion protein PDS5 homolog A from Gallus gallus (Chicken).